The following is an 85-amino-acid chain: Small ribosomal subunit protein uS17 (85 aa).

Belongs to the universal ribosomal protein uS17 family. In terms of assembly, part of the 30S ribosomal subunit.

One of the primary rRNA binding proteins, it binds specifically to the 5'-end of 16S ribosomal RNA. This Geobacter sp. (strain M21) protein is Small ribosomal subunit protein uS17.